The following is a 273-amino-acid chain: NADPH-dependent 7-cyano-7-deazaguanine reductase (273 aa).

80–82 (IES) is a substrate binding site. Residue 82–83 (SK) coordinates NADPH. Cysteine 180 (thioimide intermediate) is an active-site residue. Aspartate 187 functions as the Proton donor in the catalytic mechanism. 219–220 (HE) contributes to the substrate binding site. Residue 248 to 249 (RG) coordinates NADPH.

This sequence belongs to the GTP cyclohydrolase I family. QueF type 2 subfamily. Homodimer.

The protein resides in the cytoplasm. The enzyme catalyses 7-aminomethyl-7-carbaguanine + 2 NADP(+) = 7-cyano-7-deazaguanine + 2 NADPH + 3 H(+). It functions in the pathway tRNA modification; tRNA-queuosine biosynthesis. Its function is as follows. Catalyzes the NADPH-dependent reduction of 7-cyano-7-deazaguanine (preQ0) to 7-aminomethyl-7-deazaguanine (preQ1). This chain is NADPH-dependent 7-cyano-7-deazaguanine reductase, found in Bordetella avium (strain 197N).